Consider the following 292-residue polypeptide: Elongation factor Ts (292 aa).

The interval threonine 80–valine 83 is involved in Mg(2+) ion dislocation from EF-Tu.

The protein belongs to the EF-Ts family.

It is found in the cytoplasm. Functionally, associates with the EF-Tu.GDP complex and induces the exchange of GDP to GTP. It remains bound to the aminoacyl-tRNA.EF-Tu.GTP complex up to the GTP hydrolysis stage on the ribosome. In Ralstonia nicotianae (strain ATCC BAA-1114 / GMI1000) (Ralstonia solanacearum), this protein is Elongation factor Ts.